Consider the following 399-residue polypeptide: Tryptophan synthase beta chain (399 aa).

Lys-90 carries the N6-(pyridoxal phosphate)lysine modification.

This sequence belongs to the TrpB family. As to quaternary structure, tetramer of two alpha and two beta chains. Pyridoxal 5'-phosphate is required as a cofactor.

It catalyses the reaction (1S,2R)-1-C-(indol-3-yl)glycerol 3-phosphate + L-serine = D-glyceraldehyde 3-phosphate + L-tryptophan + H2O. It participates in amino-acid biosynthesis; L-tryptophan biosynthesis; L-tryptophan from chorismate: step 5/5. In terms of biological role, the beta subunit is responsible for the synthesis of L-tryptophan from indole and L-serine. The protein is Tryptophan synthase beta chain of Phocaeicola vulgatus (strain ATCC 8482 / DSM 1447 / JCM 5826 / CCUG 4940 / NBRC 14291 / NCTC 11154) (Bacteroides vulgatus).